The following is a 260-amino-acid chain: UPF0758 protein Smed_1459 (260 aa).

One can recognise an MPN domain in the interval 138–260 (VLSSWSAVID…HVSLKGLQLF (123 aa)). Zn(2+) contacts are provided by histidine 209, histidine 211, and aspartate 222. Residues 209-222 (HNHPSGDPTPSCAD) carry the JAMM motif motif.

This sequence belongs to the UPF0758 family.

This is UPF0758 protein Smed_1459 from Sinorhizobium medicae (strain WSM419) (Ensifer medicae).